Reading from the N-terminus, the 275-residue chain is MSTGISTDLHVHFGALNFSKTYKSGLSNRTVSFSRVGYAQNRKLSCSVSNTENVAPKDDERGKDRPLVKMCGITSARDAAMAVEAGADFIGMIIWPHSKRSISLSVAKDISKVAREGGAKPVGVFVEDDENTILRAADSSDLELVQLHGNGSRAAFSRLVRKRRVIYVLNANQDGKLLNEVPEEDCHLADWILVDSATGGSGHGFNWAQFKLPSVRSRNGWLLAGGINPTNVSEALSILQPDGIDVSSGICGTDGIQKDKSKISSFITAVRSVHY.

A chloroplast-targeting transit peptide spans 1–32 (MSTGISTDLHVHFGALNFSKTYKSGLSNRTVS).

Belongs to the TrpF family. In terms of tissue distribution, expressed in roots and shoots.

The protein localises to the plastid. The protein resides in the chloroplast. The enzyme catalyses N-(5-phospho-beta-D-ribosyl)anthranilate = 1-(2-carboxyphenylamino)-1-deoxy-D-ribulose 5-phosphate. It participates in amino-acid biosynthesis; L-tryptophan biosynthesis; L-tryptophan from chorismate: step 3/5. Its function is as follows. Catalyzes the conversion of 5-phosphoribosylanthranilate to l-(O-carboxyphenylamino)-l-deoxyribulose-5-phosphate, which is the third step of the tryptophan biosynthetic pathway. This chain is N-(5'-phosphoribosyl)anthranilate isomerase 1, chloroplastic (PAI1), found in Arabidopsis thaliana (Mouse-ear cress).